The chain runs to 165 residues: Neurotrophin-3 (165 aa).

An N-terminal signal peptide occupies residues 1 to 3 (IQS). Positions 4-119 (TSMDQGSLSE…VLNRTSRRKR (116 aa)) are excised as a propeptide. Residue Asn112 is glycosylated (N-linked (GlcNAc...) asparagine).

It belongs to the NGF-beta family.

It is found in the secreted. Functionally, seems to promote the survival of visceral and proprioceptive sensory neurons. The sequence is that of Neurotrophin-3 (NTF3) from Anilius scytale (Coral cylinder snake).